The sequence spans 433 residues: Enolase (433 aa).

Position 167 (Gln167) interacts with (2R)-2-phosphoglycerate. The active-site Proton donor is Glu209. Mg(2+) is bound by residues Asp246, Glu291, and Asp318. (2R)-2-phosphoglycerate is bound by residues Lys343, Arg372, Ser373, and Lys394. Lys343 acts as the Proton acceptor in catalysis.

Belongs to the enolase family. As to quaternary structure, component of the RNA degradosome, a multiprotein complex involved in RNA processing and mRNA degradation. It depends on Mg(2+) as a cofactor.

The protein localises to the cytoplasm. Its subcellular location is the secreted. It localises to the cell surface. The catalysed reaction is (2R)-2-phosphoglycerate = phosphoenolpyruvate + H2O. It participates in carbohydrate degradation; glycolysis; pyruvate from D-glyceraldehyde 3-phosphate: step 4/5. Catalyzes the reversible conversion of 2-phosphoglycerate (2-PG) into phosphoenolpyruvate (PEP). It is essential for the degradation of carbohydrates via glycolysis. This chain is Enolase, found in Aeromonas salmonicida (strain A449).